The chain runs to 495 residues: Nuclear receptor subfamily 6 group A member 1 (495 aa).

Residues 1–34 (MERDERPPSGGGGGGGSAGFLEPPAALPPPPRNG) are disordered. The span at 9–18 (SGGGGGGGSA) shows a compositional bias: gly residues. A DNA-binding region (nuclear receptor) is located at residues 72 to 147 (QRTCLICGDR…MGMNRKAIRE (76 aa)). The Zn(2+) site is built by cysteine 75, cysteine 78, cysteine 92, cysteine 95, cysteine 111, cysteine 117, cysteine 127, and cysteine 130. 2 consecutive NR C4-type zinc fingers follow at residues 75-95 (CLIC…CEGC) and 111-135 (CSRD…LLKC). Disordered regions lie at residues 145–165 (IRED…QISE) and 177–214 (FEEE…LSSS). Over residues 180–192 (EANHWSNHGDSDH) the composition is skewed to basic and acidic residues. The sufficient for interaction with UIMC1 stretch occupies residues 187 to 268 (HGDSDHSSPG…RSLDPQSYSL (82 aa)). The span at 202 to 214 (SNQPSPGSTLSSS) shows a compositional bias: low complexity. In terms of domain architecture, NR LBD spans 264 to 495 (QSYSLIHQLM…HSCKTSTVKE (232 aa)).

Belongs to the nuclear hormone receptor family. NR6 subfamily. As to quaternary structure, homodimer. Interacts with UIMC1. Expressed in the germ cells of both the adult testis and ovary, being most abundant in spermatids.

The protein localises to the nucleus. Orphan nuclear receptor that binds to a response element containing the sequence 5'-TCAAGGTCA-3'. Acts as a regulator of embryonic stem cell pluripotency by mediating repression of POU5F1/OCT4: binds to the DR0 element within the POU5F1/OCT4 promoter and inhibits POU5F1/OCT4 expression during embryonic stem cell differentiation. Required to restrict POU5F1/OCT4 expression to the germ cell lineage. Involved in the regulation of gene expression in germ cell development during gametogenesis. The sequence is that of Nuclear receptor subfamily 6 group A member 1 (Nr6a1) from Mus musculus (Mouse).